The following is a 203-amino-acid chain: Large ribosomal subunit protein uL6 (203 aa).

The protein belongs to the universal ribosomal protein uL6 family. In terms of assembly, part of the 50S ribosomal subunit.

Its function is as follows. This protein binds to the 23S rRNA, and is important in its secondary structure. It is located near the subunit interface in the base of the L7/L12 stalk, and near the tRNA binding site of the peptidyltransferase center. The polypeptide is Large ribosomal subunit protein uL6 (Hyphomonas neptunium (strain ATCC 15444)).